The primary structure comprises 340 residues: Phospho-N-acetylmuramoyl-pentapeptide-transferase (340 aa).

The next 10 membrane-spanning stretches (helical) occupy residues 5–25 (FILS…HLIN), 50–70 (TPTM…IIWT), 73–93 (SNPY…IGFI), 113–133 (FSLL…IIND), 147–167 (IIFN…IGTS), 178–198 (GLAI…SFIS), 218–238 (LTII…FNTY), 242–262 (IFMG…ISVL), 267–287 (ILLI…IIQV), and 318–338 (IIRF…MLKV).

The protein belongs to the glycosyltransferase 4 family. MraY subfamily. The cofactor is Mg(2+).

Its subcellular location is the cell membrane. The enzyme catalyses UDP-N-acetyl-alpha-D-muramoyl-L-alanyl-gamma-D-glutamyl-meso-2,6-diaminopimeloyl-D-alanyl-D-alanine + di-trans,octa-cis-undecaprenyl phosphate = di-trans,octa-cis-undecaprenyl diphospho-N-acetyl-alpha-D-muramoyl-L-alanyl-D-glutamyl-meso-2,6-diaminopimeloyl-D-alanyl-D-alanine + UMP. It participates in cell wall biogenesis; peptidoglycan biosynthesis. Its function is as follows. Catalyzes the initial step of the lipid cycle reactions in the biosynthesis of the cell wall peptidoglycan: transfers peptidoglycan precursor phospho-MurNAc-pentapeptide from UDP-MurNAc-pentapeptide onto the lipid carrier undecaprenyl phosphate, yielding undecaprenyl-pyrophosphoryl-MurNAc-pentapeptide, known as lipid I. The chain is Phospho-N-acetylmuramoyl-pentapeptide-transferase from Buchnera aphidicola subsp. Baizongia pistaciae (strain Bp).